The sequence spans 952 residues: MTKQTMNYAEPWSQFYGPNLGYVMEMYEQYLEDPDSVDPELKQLFKEWGAPTTEAERFDHSESAAKTYQTFRLPENPTIFSKLVAAVKLADKIRHYGHLAADINPLNTQNKDTRRIELSEFDLTEDDLKQIPVAFICPHAPAHVKNGLDAINHLRKIYTDKIAFEFSQVHNLEERNWLISQIESGAYYPSLTNEEKVALLRRLTEVEGFEKFLHRTFVGQKRFSIEGLDSMVPLLDELIRHSIEEEVKAVNIGMAHRGRLNVLAHVLGKPYEMIFAEFQHAESKDFMPSEGSVAITYGWTGDVKYHLGAARRLRNKNEHTMRITLANNPSHLEVVNPVVLGFTRAAQEDRSNAGVPSQDTDSAFAIMIHGDAAFPGQGIVAETLNLSRLQGYQTGGSIHIIANNMIGFTTESYDSRSTKYASDIAKGFEIPIVHVNADDPEACLAAANLAFAYRKRFKKDFVIDLIGYRRFGHNEMDEPMATNPTMYSIIQQHPTVRQLYAQKLIEKGIITKEAVEEMEREVAERLKIAYEKVPKDESKLDFIMDPPKPVASKLPFVKTSVEKDVLRRLNKELLQFPSDFHVFNKLERILKRREGVFDGKGKIDWAHAEILAFATILRDGVPIRLTGQDSQRGTFAQRHLVLHDMKTGEEFVPLHHISDANASFVVYNSPLTEAAVLGYEYGYNVFAPETLVLWEAQFGDFANMAQVMFDQFISSGRAKWGQKSGLVMLLPHGYEGQGPEHSSGRLERFLQLAAENNWTVANLSTAAQYFHILRRQAGILQREEVRPLVLMTPKSLLRHPLAASDVEEFTNGQFHPVIEQKGLGENREKVERIILCTGKFAIDLAEQINKMEGLDWLHIVRVEELYPFPKEELQAIFARYPNVKEIIWAQEEPKNMGSWCYVEPKLREIAPDEVDVSYIGRRRRASPAEGDPVVHRKEQERIIQCALTKKEQ.

Belongs to the alpha-ketoglutarate dehydrogenase family. Homodimer. Part of the 2-oxoglutarate dehydrogenase (OGDH) complex composed of E1 (2-oxoglutarate dehydrogenase), E2 (dihydrolipoamide succinyltransferase) and E3 (dihydrolipoamide dehydrogenase); the complex contains multiple copies of the three enzymatic components (E1, E2 and E3). Thiamine diphosphate is required as a cofactor.

It catalyses the reaction N(6)-[(R)-lipoyl]-L-lysyl-[protein] + 2-oxoglutarate + H(+) = N(6)-[(R)-S(8)-succinyldihydrolipoyl]-L-lysyl-[protein] + CO2. Functionally, E1 component of the 2-oxoglutarate dehydrogenase (OGDH) complex which catalyzes the decarboxylation of 2-oxoglutarate, the first step in the conversion of 2-oxoglutarate to succinyl-CoA and CO(2). The polypeptide is 2-oxoglutarate dehydrogenase E1 component (Geobacillus sp. (strain WCH70)).